The primary structure comprises 436 residues: MARLDKVKGTRDLLPEEMAKRRWVFERIREVFEGFNFQEVLTPTFEYTELFKLRSGEEVVKQLYAFQDKGGRDISLRPDMTSSVARLYVNRFQNAPKPIKWYYIANMFRYEEPQSGRYREFWQAGVELIGSDRVEADAEVIALFTQSYLAVGLEDFTVNIGDRILLDEFAKMLGVEDDIGLMRLIDKKDKMSREEFVGALREFGLNDDGVEKVLSLIEIKGLPDEVLPKAEELFTSEEAKAEIKRLYELVDLLDAYGVSKWVRIDLGIARGFDYYTSVVFEAIAPNDLGIGSIGGGGRYDNLIEVFGGKPTPATGFAIGIERLIPILEWKGLLPEIKLRPDVYVIPIGDDREVKKTAIEITQGLREATVRADIELTGRKLRKALDYAGKLGVPYVVLVGKKDLEAGKVTLRDMKSGEQKSIEKERAVEEILNILGV.

This sequence belongs to the class-II aminoacyl-tRNA synthetase family.

The protein resides in the cytoplasm. The catalysed reaction is tRNA(His) + L-histidine + ATP = L-histidyl-tRNA(His) + AMP + diphosphate + H(+). This Thermococcus kodakarensis (strain ATCC BAA-918 / JCM 12380 / KOD1) (Pyrococcus kodakaraensis (strain KOD1)) protein is Histidine--tRNA ligase.